We begin with the raw amino-acid sequence, 538 residues long: Chaperonin GroEL (538 aa).

ATP is bound by residues 29 to 32 (TLGP), 86 to 90 (DGTTT), G413, 476 to 478 (NAA), and D492.

Belongs to the chaperonin (HSP60) family. As to quaternary structure, forms a cylinder of 14 subunits composed of two heptameric rings stacked back-to-back. Interacts with the co-chaperonin GroES.

It localises to the cytoplasm. The enzyme catalyses ATP + H2O + a folded polypeptide = ADP + phosphate + an unfolded polypeptide.. In terms of biological role, together with its co-chaperonin GroES, plays an essential role in assisting protein folding. The GroEL-GroES system forms a nano-cage that allows encapsulation of the non-native substrate proteins and provides a physical environment optimized to promote and accelerate protein folding. The chain is Chaperonin GroEL from Bacillus sp. (strain PS3).